The following is a 277-amino-acid chain: Bifunctional protein FolD (277 aa).

NADP(+)-binding positions include 159 to 161, serine 184, and isoleucine 225; that span reads GRS.

The protein belongs to the tetrahydrofolate dehydrogenase/cyclohydrolase family. Homodimer.

It catalyses the reaction (6R)-5,10-methylene-5,6,7,8-tetrahydrofolate + NADP(+) = (6R)-5,10-methenyltetrahydrofolate + NADPH. The enzyme catalyses (6R)-5,10-methenyltetrahydrofolate + H2O = (6R)-10-formyltetrahydrofolate + H(+). Its pathway is one-carbon metabolism; tetrahydrofolate interconversion. In terms of biological role, catalyzes the oxidation of 5,10-methylenetetrahydrofolate to 5,10-methenyltetrahydrofolate and then the hydrolysis of 5,10-methenyltetrahydrofolate to 10-formyltetrahydrofolate. The protein is Bifunctional protein FolD of Acholeplasma laidlawii (strain PG-8A).